The sequence spans 131 residues: C-type natriuretic peptide 2 (131 aa).

The signal sequence occupies residues 1–22 (MLYPALLCAALLLIAPLGHTEG). Positions 23-109 (RTLYPSPDAI…KRAVTDRSRR (87 aa)) are excised as a propeptide. The cysteines at positions 115 and 131 are disulfide-linked.

This sequence belongs to the natriuretic peptide family. In terms of tissue distribution, expressed in brain and to a low extent in atrium.

Its subcellular location is the secreted. Its function is as follows. Exhibits natriuretic and vasodepressor activity. Has a cGMP-stimulating activity. In Oncorhynchus mykiss (Rainbow trout), this protein is C-type natriuretic peptide 2.